The chain runs to 390 residues: 3-ketoacyl-CoA thiolase (390 aa).

The active-site Acyl-thioester intermediate is the Cys-95. Residues His-346 and Cys-376 each act as proton acceptor in the active site.

This sequence belongs to the thiolase-like superfamily. Thiolase family. In terms of assembly, heterotetramer of two alpha chains (FadB) and two beta chains (FadA).

It is found in the cytoplasm. The enzyme catalyses an acyl-CoA + acetyl-CoA = a 3-oxoacyl-CoA + CoA. It participates in lipid metabolism; fatty acid beta-oxidation. Catalyzes the final step of fatty acid oxidation in which acetyl-CoA is released and the CoA ester of a fatty acid two carbons shorter is formed. In Acinetobacter baumannii (strain AB307-0294), this protein is 3-ketoacyl-CoA thiolase.